The chain runs to 574 residues: Putative diflavin flavoprotein A 3 (574 aa).

Residues 43–236 form a zinc metallo-hydrolase region; sequence QNGTTYNSFL…PSVKMIATGH (194 aa). Fe cation is bound by residues His92, Glu94, Asp96, His159, Asp178, and His236. The Flavodoxin-like domain maps to 265–409; that stretch reads IGVFYVSEYG…DLGQWVTRDR (145 aa). Residues 410–574 form a flavodoxin-reductase-like region; sequence SIKAMKSLGA…VHHRKVGNHY (165 aa).

In the N-terminal section; belongs to the zinc metallo-hydrolase group 3 family. It in the C-terminal section; belongs to the flavodoxin reductase family. Fe cation serves as cofactor.

Functionally, mediates electron transfer from NADH to oxygen, reducing it to water. This modular protein has 3 redox cofactors, in other organisms the same activity requires 2 or 3 proteins. The sequence is that of Putative diflavin flavoprotein A 3 (dfa3) from Nostoc sp. (strain PCC 7120 / SAG 25.82 / UTEX 2576).